Reading from the N-terminus, the 237-residue chain is MDIKLVYSTSDPVGLTIKKLGYSFEEIDEDVTDFHYKNGEAIVIFSRHESKASIPSLTVHYPGNPSEEVMGGEPKKLGIAYPRLLTSILREIKKIDLDIEKTMEATHHGPTYQNVPVIFVEIGSDKTYWTNERIVRTLVDSTLKGIDKVDETDCRDYISGFGGPHYSKLFTKLADESCIGHVISKHYVDKLDDKVIIQAIANSVNNINKVVIDSLNLKQRERIIAALKSFDIHIQLR.

The protein belongs to the DtdA deacylase family. Monomer. Zn(2+) is required as a cofactor.

It catalyses the reaction a D-aminoacyl-tRNA + H2O = a tRNA + a D-alpha-amino acid + H(+). The enzyme catalyses glycyl-tRNA(Ala) + H2O = tRNA(Ala) + glycine + H(+). Its function is as follows. D-aminoacyl-tRNA deacylase with broad substrate specificity. By recycling D-aminoacyl-tRNA to D-amino acids and free tRNA molecules, this enzyme counteracts the toxicity associated with the formation of D-aminoacyl-tRNA entities in vivo. This chain is D-aminoacyl-tRNA deacylase, found in Saccharolobus islandicus (strain Y.N.15.51 / Yellowstone #2) (Sulfolobus islandicus).